Here is a 424-residue protein sequence, read N- to C-terminus: MFS-type transporter opdF (424 aa).

Residues 1–10 (MSDTSLEKGN) are compositionally biased toward basic and acidic residues. Positions 1 to 23 (MSDTSLEKGNEGPTAEAPKVAPP) are disordered. Transmembrane regions (helical) follow at residues 36 to 56 (VAGA…IALF), 102 to 122 (VPIA…SLST), 127 to 147 (LMLS…TPAM), 160 to 180 (IVGG…PLMV), and 187 to 207 (VGFG…LVFA). Asparagine 208 carries N-linked (GlcNAc...) asparagine glycosylation. The next 6 membrane-spanning stretches (helical) occupy residues 239 to 259 (LCVA…YIVV), 265 to 285 (GMST…SFFG), 299 to 319 (FNVM…LWLP), 329 to 349 (FAAL…VLIV), 364 to 384 (VLAF…AIAA), and 391 to 411 (TYTC…LAAL).

The protein belongs to the major facilitator superfamily. Monocarboxylate porter (TC 2.A.1.13) family.

The protein resides in the membrane. Its function is as follows. MFS-type transporter; part of the gene cluster that mediates the biosynthesis of oxopyrrolidines, polyketide-amino acid hybrid compounds with feature structures of tetramic acid. The protein is MFS-type transporter opdF of Penicillium oxalicum (strain 114-2 / CGMCC 5302) (Penicillium decumbens).